Here is a 193-residue protein sequence, read N- to C-terminus: dCTP deaminase (193 aa).

DCTP contacts are provided by residues 110-115, D128, 136-138, Y171, K178, and Q182; these read RSSLAR and VLE. E138 functions as the Proton donor/acceptor in the catalytic mechanism. Residues 169–193 form a disordered region; sequence RPYNRRQDAKYRDQQGAVASRIDKD.

It belongs to the dCTP deaminase family. In terms of assembly, homotrimer.

It catalyses the reaction dCTP + H2O + H(+) = dUTP + NH4(+). It participates in pyrimidine metabolism; dUMP biosynthesis; dUMP from dCTP (dUTP route): step 1/2. Catalyzes the deamination of dCTP to dUTP. This Citrobacter koseri (strain ATCC BAA-895 / CDC 4225-83 / SGSC4696) protein is dCTP deaminase.